Here is a 73-residue protein sequence, read N- to C-terminus: Waprin-Phi2 (73 aa).

An N-terminal signal peptide occupies residues 1-21 (MKATLLLLLLFAVILPGTISA). The WAP domain occupies 22 to 72 (EQEKPGSCPNVDMPIPPLGLCKTTCSKDSDCSETKKCCKNGCGFMTCTTAR). Cystine bridges form between Cys29-Cys59, Cys42-Cys63, Cys46-Cys58, and Cys52-Cys68.

This sequence belongs to the venom waprin family. Expressed by the venom gland.

It is found in the secreted. Damages membranes of susceptible bacteria. Has no hemolytic activity. Not toxic to mice. Does not inhibit the proteinases elastase and cathepsin G. This is Waprin-Phi2 from Philodryas olfersii (Green snake).